The chain runs to 116 residues: Large ribosomal subunit protein bL17 (116 aa).

It belongs to the bacterial ribosomal protein bL17 family. In terms of assembly, part of the 50S ribosomal subunit. Contacts protein L32.

The protein is Large ribosomal subunit protein bL17 of Synechococcus sp. (strain JA-3-3Ab) (Cyanobacteria bacterium Yellowstone A-Prime).